The primary structure comprises 379 residues: Queuine tRNA-ribosyltransferase (379 aa).

The active-site Proton acceptor is the D94. Substrate-binding positions include 94–98, D148, Q191, and G218; that span reads DSGGF. The tract at residues 249–255 is RNA binding; that stretch reads GVGSPDS. D268 (nucleophile) is an active-site residue. An RNA binding; important for wobble base 34 recognition region spans residues 273–277; it reads TRIAR. 4 residues coordinate Zn(2+): C306, C308, C311, and H337.

This sequence belongs to the queuine tRNA-ribosyltransferase family. As to quaternary structure, homodimer. Within each dimer, one monomer is responsible for RNA recognition and catalysis, while the other monomer binds to the replacement base PreQ1. It depends on Zn(2+) as a cofactor.

The catalysed reaction is 7-aminomethyl-7-carbaguanine + guanosine(34) in tRNA = 7-aminomethyl-7-carbaguanosine(34) in tRNA + guanine. It participates in tRNA modification; tRNA-queuosine biosynthesis. In terms of biological role, catalyzes the base-exchange of a guanine (G) residue with the queuine precursor 7-aminomethyl-7-deazaguanine (PreQ1) at position 34 (anticodon wobble position) in tRNAs with GU(N) anticodons (tRNA-Asp, -Asn, -His and -Tyr). Catalysis occurs through a double-displacement mechanism. The nucleophile active site attacks the C1' of nucleotide 34 to detach the guanine base from the RNA, forming a covalent enzyme-RNA intermediate. The proton acceptor active site deprotonates the incoming PreQ1, allowing a nucleophilic attack on the C1' of the ribose to form the product. After dissociation, two additional enzymatic reactions on the tRNA convert PreQ1 to queuine (Q), resulting in the hypermodified nucleoside queuosine (7-(((4,5-cis-dihydroxy-2-cyclopenten-1-yl)amino)methyl)-7-deazaguanosine). In Listeria innocua serovar 6a (strain ATCC BAA-680 / CLIP 11262), this protein is Queuine tRNA-ribosyltransferase.